Here is a 707-residue protein sequence, read N- to C-terminus: Polyribonucleotide nucleotidyltransferase (707 aa).

Residues Asp486 and Asp492 each contribute to the Mg(2+) site. The 60-residue stretch at 553–612 (PRIHIIKINPEKIKDVIGKGGSVIRMLTEETGTIIEIEDDGTVKISSTVKEKAKNAIRRI) folds into the KH domain. One can recognise an S1 motif domain in the interval 622–690 (GRIYSGKVTR…RQGRLRLSIK (69 aa)).

This sequence belongs to the polyribonucleotide nucleotidyltransferase family. As to quaternary structure, component of the RNA degradosome, which is a multiprotein complex involved in RNA processing and mRNA degradation. Requires Mg(2+) as cofactor.

It is found in the cytoplasm. It catalyses the reaction RNA(n+1) + phosphate = RNA(n) + a ribonucleoside 5'-diphosphate. Functionally, involved in mRNA degradation. Catalyzes the phosphorolysis of single-stranded polyribonucleotides processively in the 3'- to 5'-direction. The chain is Polyribonucleotide nucleotidyltransferase from Buchnera aphidicola subsp. Acyrthosiphon pisum (strain 5A).